We begin with the raw amino-acid sequence, 745 residues long: Class E vacuolar protein-sorting machinery protein hse1 (745 aa).

The region spanning 17 to 146 (ATDENLTSED…RLKQSNPTLQ (130 aa)) is the VHS domain. The segment at 142–237 (NPTLQPPSAP…PQPVPSSTTA (96 aa)) is disordered. In terms of domain architecture, UIM spans 163-182 (KEEEELQMALQLSLQEEERK). Positions 186–214 (AGASGATASSSSGGAAAGPSNAGGAVASG) are enriched in low complexity. Residues 238-297 (ATVSRVRALYDFVPSEPGELEFKKGDVIAVLKSVYKDWWSGSLKGKTGIFPLNYVEKLAD) enclose the SH3 domain. Residues 390 to 745 (SSMSHPPGPT…GLADYYRSAY (356 aa)) form a disordered region. The span at 425 to 446 (QQQEPPRFYNPAPAQDAPQYPA) shows a compositional bias: low complexity. 2 stretches are compositionally biased toward polar residues: residues 518–532 (LNTT…QYTP) and 540–576 (GANN…TNPL). Residues 577-590 (SNPSYNAPSAPSYS) are compositionally biased toward low complexity. Residues 618-635 (APPPPSGPAPSGPAPSAP) are compositionally biased toward pro residues. A compositionally biased stretch (low complexity) spans 636 to 647 (SAPSAPSAPGAP). The span at 648-660 (NSYTQGAYHSQNP) shows a compositional bias: polar residues. Low complexity-rich tracts occupy residues 662–672 (AAAAAAAAAAA) and 719–733 (SAPG…APGQ).

The protein belongs to the STAM family. In terms of assembly, component of the ESCRT-0 complex composed of hse1 and vps27.

It localises to the endosome membrane. Component of the ESCRT-0 complex which is the sorting receptor for ubiquitinated cargo proteins at the multivesicular body (MVB). This chain is Class E vacuolar protein-sorting machinery protein hse1 (hse1), found in Neurospora crassa (strain ATCC 24698 / 74-OR23-1A / CBS 708.71 / DSM 1257 / FGSC 987).